The primary structure comprises 1036 residues: Protein CLEC16A (1036 aa).

The region spanning 51-198 (IRSITEILIW…AVRTITLNVY (148 aa)) is the FPL domain. Disordered regions lie at residues 375-416 (SLEM…DAEK), 437-458 (GTSV…NSEN), 876-967 (HSSP…PSLL), and 1008-1036 (SQLP…PTEH). Residues 381 to 392 (HKGKKRMQKRPN) are compositionally biased toward basic residues. Composition is skewed to low complexity over residues 877–891 (SSPS…FASG), 898–923 (STSH…APTT), and 943–954 (NSKPSKNSSARS).

The protein belongs to the CLEC16A/gop-1 family. Interacts with RNF41/NRDP1. Ubiquitously expressed. Expressed in pancreatic islets.

The protein localises to the endosome membrane. It is found in the lysosome membrane. In terms of biological role, regulator of mitophagy through the upstream regulation of the RNF41/NRDP1-PRKN pathway. Mitophagy is a selective form of autophagy necessary for mitochondrial quality control. The RNF41/NRDP1-PRKN pathway regulates autophagosome-lysosome fusion during late mitophagy. May protect RNF41/NRDP1 from proteasomal degradation, RNF41/NRDP1 which regulates proteasomal degradation of PRKN. Plays a key role in beta cells functions by regulating mitophagy/autophagy and mitochondrial health. The chain is Protein CLEC16A from Mus musculus (Mouse).